The following is a 1194-amino-acid chain: Phosphatidylinositol-3,5-bisphosphate 3-phosphatase MTMR3 (1194 aa).

Position 4 is a phosphoserine (serine 4). Residues 151–572 enclose the Myotubularin phosphatase domain; the sequence is EHVTSRFKNE…RNLMLWSAVY (422 aa). 3 residues coordinate a 1,2-diacyl-sn-glycero-3-phospho-(1D-myo-inositol-3,5-bisphosphate): asparagine 322, asparagine 347, and isoleucine 348. Residues asparagine 322, asparagine 347, and isoleucine 348 each coordinate a 1,2-diacyl-sn-glycero-3-phospho-(1D-myo-inositol-3-phosphate). Cysteine 409 serves as the catalytic Phosphocysteine intermediate. 8 residues coordinate a 1,2-diacyl-sn-glycero-3-phospho-(1D-myo-inositol-3,5-bisphosphate): serine 410, aspartate 411, glycine 412, tryptophan 413, aspartate 414, arginine 415, lysine 451, and arginine 455. 6 residues coordinate a 1,2-diacyl-sn-glycero-3-phospho-(1D-myo-inositol-3-phosphate): serine 410, aspartate 411, glycine 412, tryptophan 413, aspartate 414, and arginine 415. Residue arginine 455 participates in a 1,2-diacyl-sn-glycero-3-phospho-(1D-myo-inositol-3-phosphate) binding. Residues 583–609 form a disordered region; that stretch reads DDSCAPYPAPGTSPDEPPLSRLPKTRS. Over residues 589–599 the composition is skewed to pro residues; sequence YPAPGTSPDEP. Phosphoserine is present on residues serine 609, serine 629, serine 643, and serine 647. The span at 693–724 shows a compositional bias: basic and acidic residues; that stretch reads TKEESGVEEPTHREHTEVPEVKEEAPLAKESR. 3 disordered regions span residues 693 to 731, 852 to 871, and 876 to 897; these read TKEESGVEEPTHREHTEVPEVKEEAPLAKESRTAAQGSG, ESGPQLHHRPCLASSGRFSG, and PIAPEPRSAERPQWDSVLHRTS. Threonine 725 bears the Phosphothreonine mark. At serine 904 the chain carries Phosphoserine. 2 disordered regions span residues 932–971 and 988–1017; these read NKASEQPAGFDTLQKYPTPNGHCANGETGRSKDSLSHQLS and KWLNSHSGRPSTTNSPEQPSRSHLDDDGMP. The span at 991–1006 shows a compositional bias: polar residues; it reads NSHSGRPSTTNSPEQP. A coiled-coil region spans residues 1025–1058; the sequence is QRLRQIESGHQQEVETLKKQVQELKSRLESQYLT. Phosphoserine is present on serine 1060. The FYVE-type zinc finger occupies 1115–1175; it reads DHLAAHCYAC…VCKSCYSSLH (61 aa). The Zn(2+) site is built by cysteine 1121, cysteine 1124, cysteine 1137, cysteine 1140, cysteine 1145, cysteine 1148, cysteine 1167, and cysteine 1170.

The protein belongs to the protein-tyrosine phosphatase family. Non-receptor class myotubularin subfamily. As to quaternary structure, forms heterodimers with MTMR4 that recruit both CEP55 and PLK1; occurs during early mitosis, regulates the phosphorylation of CEP55 by PLK1 and its recruitment to the midbody where it mediates cell abscission.

The protein resides in the cytoplasm. The protein localises to the cytosol. It localises to the membrane. The enzyme catalyses a 1,2-diacyl-sn-glycero-3-phospho-(1D-myo-inositol-3,5-bisphosphate) + H2O = a 1,2-diacyl-sn-glycero-3-phospho-(1D-myo-inositol-5-phosphate) + phosphate. The catalysed reaction is a 1,2-diacyl-sn-glycero-3-phospho-(1D-myo-inositol-3-phosphate) + H2O = a 1,2-diacyl-sn-glycero-3-phospho-(1D-myo-inositol) + phosphate. It catalyses the reaction 1,2-dihexadecanoyl-sn-glycero-3-phospho-(1D-myo-inositol-3-phosphate) + H2O = 1,2-dihexadecanoyl-sn-glycero-3-phospho-(1D-myo-inositol) + phosphate. It carries out the reaction 1,2-dioctanoyl-sn-glycero-3-phospho-(1-D-myo-inositol-3-phosphate) + H2O = 1,2-dioctanoyl-sn-glycero-3-phospho-(1D-myo-inositol) + phosphate. The enzyme catalyses 1,2-dihexadecanoyl-sn-glycero-3-phospho-(1D-myo-inositol-3,5-phosphate) + H2O = 1,2-dihexadecanoyl-sn-glycero-3-phospho-(1D-myo-inositol-5-phosphate) + phosphate. Lipid phosphatase that specifically dephosphorylates the D-3 position of phosphatidylinositol 3-phosphate and phosphatidylinositol 3,5-bisphosphate, generating phosphatidylinositol and phosphatidylinositol 5-phosphate. Decreases the levels of phosphatidylinositol 3-phosphate, a phospholipid found in cell membranes where it acts as key regulator of both cell signaling and intracellular membrane traffic. Could also have a molecular sequestering/adapter activity and regulate biological processes independently of its phosphatase activity. It includes the regulation of midbody abscission during mitotic cytokinesis. The chain is Phosphatidylinositol-3,5-bisphosphate 3-phosphatase MTMR3 from Rattus norvegicus (Rat).